Here is a 193-residue protein sequence, read N- to C-terminus: Glycerol-3-phosphate acyltransferase (193 aa).

The next 5 membrane-spanning stretches (helical) occupy residues 4–24, 56–76, 80–100, 116–136, and 152–174; these read LALI…AVLI, GLVL…GYFL, PLLL…PLFF, APIG…IVLI, and PLFT…CLIV.

This sequence belongs to the PlsY family. In terms of assembly, probably interacts with PlsX.

The protein resides in the cell inner membrane. The enzyme catalyses an acyl phosphate + sn-glycerol 3-phosphate = a 1-acyl-sn-glycero-3-phosphate + phosphate. It functions in the pathway lipid metabolism; phospholipid metabolism. In terms of biological role, catalyzes the transfer of an acyl group from acyl-phosphate (acyl-PO(4)) to glycerol-3-phosphate (G3P) to form lysophosphatidic acid (LPA). This enzyme utilizes acyl-phosphate as fatty acyl donor, but not acyl-CoA or acyl-ACP. This Aliivibrio salmonicida (strain LFI1238) (Vibrio salmonicida (strain LFI1238)) protein is Glycerol-3-phosphate acyltransferase.